Consider the following 313-residue polypeptide: Chemotaxis protein CheV2 (313 aa).

A CheW-like domain is found at 16 to 172 (EAQFLCFRLD…VEKMISDVFP (157 aa)). The 121-residue stretch at 193–313 (LILIAEDSLS…IHEMLKKTLS (121 aa)) folds into the Response regulatory domain. Residue D246 is modified to 4-aspartylphosphate.

In terms of processing, phosphorylated; probably by transfer of CheAY phosphate group.

In terms of biological role, plays a role in chemotaxis signal transduction system in order to colonize the host stomach. May act as a phosphate sink to control the flow of phosphate to CheAY. The polypeptide is Chemotaxis protein CheV2 (Helicobacter pylori (strain ATCC 700392 / 26695) (Campylobacter pylori)).